The chain runs to 167 residues: Cofilin-2 (167 aa).

Residues 4 to 153 form the ADF-H domain; the sequence is GVTVNDEVIK…KDRCTLADKL (150 aa). Positions 30–34 match the Nuclear localization signal motif; sequence KKRKK.

This sequence belongs to the actin-binding proteins ADF family.

Its subcellular location is the nucleus matrix. The protein resides in the cytoplasm. It localises to the cytoskeleton. In terms of biological role, controls reversibly actin polymerization and depolymerization in a pH-sensitive manner. It has the ability to bind G- and F-actin in a 1:1 ratio of cofilin to actin. It is the major component of intranuclear and cytoplasmic actin rods. This is Cofilin-2 (cfl2) from Xenopus tropicalis (Western clawed frog).